A 55-amino-acid chain; its full sequence is Large ribosomal subunit protein bL33 (55 aa).

It belongs to the bacterial ribosomal protein bL33 family.

This Rhizobium meliloti (strain 1021) (Ensifer meliloti) protein is Large ribosomal subunit protein bL33.